A 399-amino-acid chain; its full sequence is Large envelope protein (399 aa).

Position 1 is an N-acetylmethionine (Met-1). Residue Gly-2 is the site of N-myristoyl glycine; by host attachment. The pre-S1 stretch occupies residues 2–118 (GLSWTVPLEW…PPLRDSHPQA (117 aa)). Residues 2–173 (GLSWTVPLEW…FSRIGDPAPN (172 aa)) form a pre-S region. Topologically, residues 2-180 (GLSWTVPLEW…APNMENITSG (179 aa)) are virion surface; in external conformation. Residues 2–252 (GLSWTVPLEW…PGYRWMCLRR (251 aa)) lie on the Intravirion; in internal conformation side of the membrane. Ser-4 carries N-linked (GlcNAc...) asparagine glycosylation. A disordered region spans residues 69–117 (PHGGLLGWSPQSQGTLTTLPADPPPASTNRQSGRQPTPISPPLRDSHPQ). A pre-S2 region spans residues 119–173 (MQWNSTAFHQALQNPKVRGLYFPAGGSSSGIVNPVPTIASHISSIFSRIGDPAPN). The helical transmembrane segment at 181–201 (FLGPLLVLQAGFFLLTRILTI) threads the bilayer. Residues 202–252 (PQSLDSWWTSLNFLGGVPVCPGLNSQSPTSNHSPISCPPTCPGYRWMCLRR) lie on the Intravirion; in external conformation side of the membrane. The helical transmembrane segment at 253–273 (FIIFLFILLLCLIFLLVLLDY) threads the bilayer. Over 274-347 (QGMLPVCPLI…WASVRFSWLS (74 aa)) the chain is Virion surface. A glycan (N-linked (GlcNAc...) asparagine; by host) is linked at Asn-319. Residues 348 to 368 (LLVPFVQWFVGLSPTVWLSAI) traverse the membrane as a helical segment. Over 369 to 374 (WMMWYW) the chain is Intravirion. Residues 375 to 397 (GPNLYNILSPFIPLLPIFFCLWV) form a helical membrane-spanning segment. The Virion surface segment spans residues 398–399 (YI).

The protein belongs to the orthohepadnavirus major surface antigen family. As to quaternary structure, in its internal form (Li-HBsAg), interacts with the capsid protein and with the isoform S. Interacts with host chaperone CANX. Associates with host chaperone CANX through its pre-S2 N glycan; this association may be essential for isoform M proper secretion. In terms of assembly, interacts with isoform L. Interacts with the antigens of satellite virus HDV (HDVAgs); this interaction is required for encapsidation of HDV genomic RNA. Post-translationally, isoform M is N-terminally acetylated by host at a ratio of 90%, and N-glycosylated by host at the pre-S2 region. Myristoylated.

Its subcellular location is the virion membrane. In terms of biological role, the large envelope protein exists in two topological conformations, one which is termed 'external' or Le-HBsAg and the other 'internal' or Li-HBsAg. In its external conformation the protein attaches the virus to cell receptors and thereby initiating infection. This interaction determines the species specificity and liver tropism. This attachment induces virion internalization predominantly through caveolin-mediated endocytosis. The large envelope protein also assures fusion between virion membrane and endosomal membrane. In its internal conformation the protein plays a role in virion morphogenesis and mediates the contact with the nucleocapsid like a matrix protein. Its function is as follows. The middle envelope protein plays an important role in the budding of the virion. It is involved in the induction of budding in a nucleocapsid independent way. In this process the majority of envelope proteins bud to form subviral lipoprotein particles of 22 nm of diameter that do not contain a nucleocapsid. This is Large envelope protein from Hepatitis B virus genotype G (isolate IG29227/2000) (HBV-G).